Consider the following 600-residue polypeptide: MAIKQLSETLINQIAAGEVIERPASAAKELIENALDAGATRIEVATAGGGKTLLRVTDNGNGMSPADLELAIRRHCTSKIDDTLTDIRTLGFRGEALPSIGSVARLSITTRTAGAREGAAISVIGGKTESVRPSPANVGTVVEVRDLFFATPARLKFMKTEKAEAAAISEVVRRMAIAFPKVRFVVSGSDRSTLEFPATGDDRLARMAQVLGKDFRDNAIGIDAEREEARLSGFAGVPTFNRGNSLQQYAFVNGRPVQDKLILSAIRAAYAETIPQGRYPVAVLSIALDPALVDVNVHPAKSDVRFRDPGLIRGLIIGAIREALSRGGDRAATTGAQGMMRSFRPEAYRAEPHRAQAPWTAATSPYRPMRFDEPARGFAEAPQAAFQEFAQPAARPAETAPNGTVEPAFPLGAARAQLHENYIVAQTEEGLVIVDQHAAHERLVFEAMRTALHSRPVPAQALLIPEIVDLAEDDCDRLMAHAEEFLRLGLSIERFGPGAIAVRETPAMLGEMDASGLVRQLADELAEWDTANGLAGRLDYLAATMACHGSVRSGRRMRPEEMNALLRQMEATPGSGQCNHGRPTYIELKLADIERLFGRS.

The protein belongs to the DNA mismatch repair MutL/HexB family.

In terms of biological role, this protein is involved in the repair of mismatches in DNA. It is required for dam-dependent methyl-directed DNA mismatch repair. May act as a 'molecular matchmaker', a protein that promotes the formation of a stable complex between two or more DNA-binding proteins in an ATP-dependent manner without itself being part of a final effector complex. This Sinorhizobium fredii (strain NBRC 101917 / NGR234) protein is DNA mismatch repair protein MutL.